Here is a 239-residue protein sequence, read N- to C-terminus: 1-(5-phosphoribosyl)-5-[(5-phosphoribosylamino)methylideneamino] imidazole-4-carboxamide isomerase (239 aa).

Residue Asp-8 is the Proton acceptor of the active site. Asp-129 serves as the catalytic Proton donor.

Belongs to the HisA/HisF family.

Its subcellular location is the cytoplasm. It carries out the reaction 1-(5-phospho-beta-D-ribosyl)-5-[(5-phospho-beta-D-ribosylamino)methylideneamino]imidazole-4-carboxamide = 5-[(5-phospho-1-deoxy-D-ribulos-1-ylimino)methylamino]-1-(5-phospho-beta-D-ribosyl)imidazole-4-carboxamide. The protein operates within amino-acid biosynthesis; L-histidine biosynthesis; L-histidine from 5-phospho-alpha-D-ribose 1-diphosphate: step 4/9. In Bacillus mycoides (strain KBAB4) (Bacillus weihenstephanensis), this protein is 1-(5-phosphoribosyl)-5-[(5-phosphoribosylamino)methylideneamino] imidazole-4-carboxamide isomerase.